The chain runs to 396 residues: Elongation factor Tu (396 aa).

Residues 10–205 (KPHVNIGTIG…AVDESIPDPV (196 aa)) form the tr-type G domain. The segment at 19-26 (GHVDHGKT) is G1. 19–26 (GHVDHGKT) serves as a coordination point for GTP. Mg(2+) is bound at residue Thr26. Residues 62 to 66 (GITIN) form a G2 region. The tract at residues 83 to 86 (DAPG) is G3. Residues 83–87 (DAPGH) and 138–141 (NKAD) each bind GTP. Positions 138–141 (NKAD) are G4. The G5 stretch occupies residues 175-177 (SAL).

Belongs to the TRAFAC class translation factor GTPase superfamily. Classic translation factor GTPase family. EF-Tu/EF-1A subfamily. In terms of assembly, monomer.

It is found in the cytoplasm. The enzyme catalyses GTP + H2O = GDP + phosphate + H(+). GTP hydrolase that promotes the GTP-dependent binding of aminoacyl-tRNA to the A-site of ribosomes during protein biosynthesis. The protein is Elongation factor Tu of Mycolicibacterium gilvum (strain PYR-GCK) (Mycobacterium gilvum (strain PYR-GCK)).